We begin with the raw amino-acid sequence, 641 residues long: Chaperone protein DnaK (641 aa).

Threonine 200 carries the phosphothreonine; by autocatalysis modification. Positions 606–623 (AEQGGNADAASGNAQASK) are enriched in low complexity. The interval 606–628 (AEQGGNADAASGNAQASKAADDV) is disordered.

The protein belongs to the heat shock protein 70 family.

Functionally, acts as a chaperone. The sequence is that of Chaperone protein DnaK from Xanthomonas axonopodis pv. citri (strain 306).